A 130-amino-acid polypeptide reads, in one-letter code: uncharacterized protein (130 aa).

3 helical membrane-spanning segments follow: residues A34–F54, L73–A93, and F107–I127.

It localises to the cell membrane. This is an uncharacterized protein from Mycoplasma pneumoniae (strain ATCC 29342 / M129 / Subtype 1) (Mycoplasmoides pneumoniae).